Consider the following 563-residue polypeptide: BOS complex subunit NCLN (563 aa).

Positions 1–42 (MLEEAGEVLENMLKASCLPLGFIVFLPAVLLLVAPPLPAADA) are cleaved as a signal peptide. The Lumenal segment spans residues 43–522 (AHEFTVYRMQ…VMNAYRVKPA (480 aa)). Asn241 and Asn428 each carry an N-linked (GlcNAc...) asparagine glycan. Residues 523 to 543 (VFDLLLAVGIAAYLGMAYVAV) form a helical membrane-spanning segment. Residues 544–563 (QHFSLLYKTVQRLLVKAKTQ) are Cytoplasmic-facing.

The protein belongs to the nicastrin family. Component of the back of Sec61 (BOS) complex, composed of NCLN/Nicalin, NOMO (NOMO1, NOMO2 or NOMO3) and TMEM147. The BOS complex is part of the multi-pass translocon (MPT) complex, composed of three subcomplexes, the GEL complex (composed of RAB5IF/OPTI and TMCO1), the BOS complex (composed of NCLN/Nicalin, NOMO and TMEM147) and the PAT complex (composed of WDR83OS/Asterix and CCDC47). The MPT complex associates with the SEC61 complex. Highly expressed in pancreas and skeletal muscle and, at lower levels, in heart.

It is found in the endoplasmic reticulum membrane. Its function is as follows. Component of the multi-pass translocon (MPT) complex that mediates insertion of multi-pass membrane proteins into the lipid bilayer of membranes. The MPT complex takes over after the SEC61 complex: following membrane insertion of the first few transmembrane segments of proteins by the SEC61 complex, the MPT complex occludes the lateral gate of the SEC61 complex to promote insertion of subsequent transmembrane regions. May antagonize Nodal signaling and subsequent organization of axial structures during mesodermal patterning, via its interaction with NOMO. The sequence is that of BOS complex subunit NCLN from Homo sapiens (Human).